Reading from the N-terminus, the 223-residue chain is GTP cyclohydrolase 1 (223 aa).

Zn(2+)-binding residues include C114, H117, and C185.

It belongs to the GTP cyclohydrolase I family. Homomer.

The enzyme catalyses GTP + H2O = 7,8-dihydroneopterin 3'-triphosphate + formate + H(+). It participates in cofactor biosynthesis; 7,8-dihydroneopterin triphosphate biosynthesis; 7,8-dihydroneopterin triphosphate from GTP: step 1/1. This is GTP cyclohydrolase 1 from Chlorobium phaeovibrioides (strain DSM 265 / 1930) (Prosthecochloris vibrioformis (strain DSM 265)).